The chain runs to 176 residues: Shikimate kinase (176 aa).

12 to 17 provides a ligand contact to ATP; the sequence is GSGKST. Mg(2+) is bound at residue Ser16. Asp34, Arg58, and Gly80 together coordinate substrate. Arg117 serves as a coordination point for ATP. Position 136 (Arg136) interacts with substrate. Arg153 contacts ATP.

The protein belongs to the shikimate kinase family. Monomer. It depends on Mg(2+) as a cofactor.

It localises to the cytoplasm. The enzyme catalyses shikimate + ATP = 3-phosphoshikimate + ADP + H(+). It functions in the pathway metabolic intermediate biosynthesis; chorismate biosynthesis; chorismate from D-erythrose 4-phosphate and phosphoenolpyruvate: step 5/7. Its function is as follows. Catalyzes the specific phosphorylation of the 3-hydroxyl group of shikimic acid using ATP as a cosubstrate. This chain is Shikimate kinase, found in Mycobacterium avium (strain 104).